A 346-amino-acid chain; its full sequence is Glycerol-3-phosphate dehydrogenase [NAD(P)+] (346 aa).

Positions 15, 16, 36, and 110 each coordinate NADPH. Sn-glycerol 3-phosphate is bound by residues K110, G139, and S141. An NADPH-binding site is contributed by A143. Sn-glycerol 3-phosphate is bound by residues K194, D247, S257, R258, and N259. K194 functions as the Proton acceptor in the catalytic mechanism. R258 serves as a coordination point for NADPH. Residues V282 and E284 each coordinate NADPH.

It belongs to the NAD-dependent glycerol-3-phosphate dehydrogenase family.

The protein resides in the cytoplasm. It carries out the reaction sn-glycerol 3-phosphate + NAD(+) = dihydroxyacetone phosphate + NADH + H(+). The catalysed reaction is sn-glycerol 3-phosphate + NADP(+) = dihydroxyacetone phosphate + NADPH + H(+). The protein operates within membrane lipid metabolism; glycerophospholipid metabolism. Its function is as follows. Catalyzes the reduction of the glycolytic intermediate dihydroxyacetone phosphate (DHAP) to sn-glycerol 3-phosphate (G3P), the key precursor for phospholipid synthesis. In Xylella fastidiosa (strain Temecula1 / ATCC 700964), this protein is Glycerol-3-phosphate dehydrogenase [NAD(P)+].